The primary structure comprises 291 residues: ATP synthase subunit a (291 aa).

Helical transmembrane passes span 50 to 70 (LDSM…FWIV), 108 to 128 (IAPL…MDLI), 161 to 181 (DPNI…FYSI), 203 to 223 (PVAK…TFLA), 241 to 261 (LIFI…SVPW), and 262 to 282 (AIFH…LTIV).

The protein belongs to the ATPase A chain family. In terms of assembly, F-type ATPases have 2 components, CF(1) - the catalytic core - and CF(0) - the membrane proton channel. CF(1) has five subunits: alpha(3), beta(3), gamma(1), delta(1), epsilon(1). CF(0) has three main subunits: a(1), b(2) and c(9-12). The alpha and beta chains form an alternating ring which encloses part of the gamma chain. CF(1) is attached to CF(0) by a central stalk formed by the gamma and epsilon chains, while a peripheral stalk is formed by the delta and b chains.

The protein localises to the cell inner membrane. In terms of biological role, key component of the proton channel; it plays a direct role in the translocation of protons across the membrane. The sequence is that of ATP synthase subunit a from Acinetobacter baumannii (strain SDF).